Reading from the N-terminus, the 582-residue chain is DNA polymerase IV (582 aa).

A disordered region spans residues 127–161 (NADDGQSSTDKESEISTDVESERNDDSNNKDMIQA). Positions 135 to 155 (TDKESEISTDVESERNDDSNN) are enriched in basic and acidic residues. The involved in ssDNA binding stretch occupies residues 360-369 (RGYSKCGDID). Positions 367, 369, and 502 each coordinate Mg(2+).

The protein belongs to the DNA polymerase type-X family. As to quaternary structure, interacts with DNL4 subunit of the DNL4-LIF1 complex. Mg(2+) serves as cofactor.

It localises to the nucleus. It carries out the reaction DNA(n) + a 2'-deoxyribonucleoside 5'-triphosphate = DNA(n+1) + diphosphate. Its activity is regulated as follows. Stimulated by the interaction with the DNL4-LIF1 complex. Its function is as follows. Repair polymerase. Involved in gap-filling in DNA nonhomologous end joining (NHEJ) required for double-strand break repair. Seems to conduct DNA synthesis in a stepwise distributive fashion rather than in a processive fashion as for other DNA polymerases. Preferentially acts upon short gaps formed by the alignment of linear duplexes with complementary single-strand ends. Required for filling gaps that need removal of a 5'- or 3'-terminal mismatch, however lacks nuclease activities. This chain is DNA polymerase IV (POL4), found in Saccharomyces cerevisiae (strain ATCC 204508 / S288c) (Baker's yeast).